The primary structure comprises 797 residues: Calcium-transporting ATPase CtpE (797 aa).

Helical transmembrane passes span 55–75 (LLLI…LLII), 215–235 (ILQF…YTQL), and 254–274 (VPMV…VGVV). Asp301 functions as the 4-aspartylphosphate intermediate in the catalytic mechanism. The Mg(2+) site is built by Asp301, Thr303, and Asp536. The next 6 membrane-spanning stretches (helical) occupy residues 601-621 (TVYS…AIPL), 633-653 (IHVT…LSLA), 667-687 (VMTS…VTYL), 703-723 (ASTA…AVIA), 729-749 (WRLA…SLPL), and 764-784 (TSIA…MWWI).

It belongs to the cation transport ATPase (P-type) (TC 3.A.3) family.

It is found in the cell membrane. It carries out the reaction Ca(2+)(in) + ATP + H2O = Ca(2+)(out) + ADP + phosphate + H(+). Its function is as follows. P-type ATPase involved in specific uptake of calcium. The protein is Calcium-transporting ATPase CtpE (ctpE) of Mycobacterium bovis (strain ATCC BAA-935 / AF2122/97).